We begin with the raw amino-acid sequence, 251 residues long: Aquaporin TIP1-1 (251 aa).

The residue at position 1 (Met1) is an N-acetylmethionine. Topologically, residues 1 to 23 (MPIRNIAIGRPDEATRPDALKAA) are cytoplasmic. The chain crosses the membrane as a helical span at residues 24–44 (LAEFISTLIFVVAGSGSGMAF). Residues 45–56 (NKLTENGATTPS) lie on the Vacuolar side of the membrane. A helical membrane pass occupies residues 57–77 (GLVAAAVAHAFGLFVAVSVGA). The Cytoplasmic portion of the chain corresponds to 78–103 (NISGGHVNPAVTFGAFIGGNITLLRG). An NPA 1 motif is present at residues 85 to 87 (NPA). Residues 104–124 (ILYWIAQLLGSVVACLILKFA) form a helical membrane-spanning segment. At 125–143 (TGGLAVPAFGLSAGVGVLN) the chain is on the vacuolar side. The helical transmembrane segment at 144–164 (AFVFEIVMTFGLVYTVYATAI) threads the bilayer. Topologically, residues 165–172 (DPKNGSLG) are cytoplasmic. The chain crosses the membrane as a helical span at residues 173-193 (TIAPIAIGFIVGANILAGGAF). Over 194–218 (SGASMNPAVAFGPAVVSWTWTNHWV) the chain is Vacuolar. Positions 199-201 (NPA) match the NPA 2 motif. A helical membrane pass occupies residues 219 to 239 (YWAGPLVGGGIAGLIYEVFFI). Over 240-251 (NTTHEQLPTTDY) the chain is Cytoplasmic.

Belongs to the MIP/aquaporin (TC 1.A.8) family. TIP (TC 1.A.8.10) subfamily. As to quaternary structure, interacts with cucumber mosaic virus (CMV) Protein 1a. In terms of tissue distribution, in all the vegetative organs, but not in seeds. Preferentially expressed in roots.

The protein resides in the vacuole membrane. Functionally, water channel required to facilitate the transport of water, diffusion of amino acids and/or peptides from the vacuolar compartment to the cytoplasm. Does not promote glycerol permeability. May play a role in the control of cell turgor and cell expansion. Its function is impaired by Hg(2+). May be involved in a vesicle-based metabolite routing through or between pre-vacuolar compartments and the central vacuole. Transports urea in yeast cells in a pH-independent manner. Transports H(2)O(2) in yeast cells. This chain is Aquaporin TIP1-1 (TIP1-1), found in Arabidopsis thaliana (Mouse-ear cress).